The chain runs to 206 residues: Thymidylate kinase (206 aa).

10–17 (GVDGVGKT) serves as a coordination point for ATP.

This sequence belongs to the thymidylate kinase family.

It carries out the reaction dTMP + ATP = dTDP + ADP. Phosphorylation of dTMP to form dTDP in both de novo and salvage pathways of dTTP synthesis. The polypeptide is Thymidylate kinase (Bifidobacterium longum (strain DJO10A)).